A 593-amino-acid polypeptide reads, in one-letter code: UvrABC system protein C (593 aa).

The 78-residue stretch at 17 to 94 (MEPGCYLMKD…IKQYQPRYNI (78 aa)) folds into the GIY-YIG domain. The UVR domain occupies 199–234 (KTILKSLEERMLTASESLDFERAKEYRDLIQHIQNL).

It belongs to the UvrC family. In terms of assembly, interacts with UvrB in an incision complex.

Its subcellular location is the cytoplasm. Functionally, the UvrABC repair system catalyzes the recognition and processing of DNA lesions. UvrC both incises the 5' and 3' sides of the lesion. The N-terminal half is responsible for the 3' incision and the C-terminal half is responsible for the 5' incision. The protein is UvrABC system protein C of Staphylococcus aureus (strain USA300).